The following is a 670-amino-acid chain: CLK4-associating serine/arginine rich protein (670 aa).

Phosphoserine is present on Ser-101. Disordered regions lie at residues 171 to 232 and 258 to 670; these read TVAE…GMAD and EKAM…HYRH. A compositionally biased stretch (acidic residues) spans 182-214; that stretch reads PEEEESPAEEESNSDEDEVIPDIDVEVDVDELN. The span at 265–283 shows a compositional bias: basic residues; sequence RRSRRQRREFREKRLRGRK. A phosphoserine mark is found at Ser-285 and Ser-294. Residues 290–313 are compositionally biased toward basic and acidic residues; sequence ARRDSPTYDPYKRSPSESSSESRS. A Phosphothreonine modification is found at Thr-327. 2 positions are modified to phosphoserine: Ser-331 and Ser-335. A compositionally biased stretch (low complexity) spans 340 to 355; that stretch reads AAAAAAAAASGAATGK. Positions 356–365 are enriched in pro residues; it reads PPAPPQPGGP. The segment covering 378-400 has biased composition (low complexity); that stretch reads STSSSSSSASRTSSSRSRSSSSS. Basic residues-rich tracts occupy residues 411–443 and 481–491; these read SGRH…RRHS and RGGRGPRHHSS. The segment covering 492-529 has biased composition (low complexity); the sequence is SRSSWSLSPSRSRSLTRSRSPSLSRSRSLSRSRSQSHS. A Phosphoserine modification is found at Ser-543. Position 569 is a phosphothreonine (Thr-569). Residues 581–643 adopt a coiled-coil conformation; the sequence is ALNRQFKADK…ERQYSRQSRS (63 aa). 2 stretches are compositionally biased toward basic and acidic residues: residues 586–613 and 621–637; these read FKAD…ELRA and KERE…ERQY. A compositionally biased stretch (low complexity) spans 638–647; sequence SRQSRSPSPR. Basic residues predominate over residues 655 to 670; that stretch reads SRRRSRSRSRSPHYRH.

Belongs to the splicing factor SR family. As to quaternary structure, probably interacts with CLK4. Post-translationally, phosphorylated in vitro by CLK4.

The protein localises to the nucleus. Functionally, probably functions as an alternative splicing regulator. May regulate the mRNA splicing of genes such as CLK1. May act by regulating members of the CLK kinase family. The chain is CLK4-associating serine/arginine rich protein (CLASRP) from Bos taurus (Bovine).